The chain runs to 689 residues: Bifunctional protein GAL10 (689 aa).

The tract at residues 1–345 (MSYILVTGGA…TTKNPFGFQI (345 aa)) is galactowaldenase. 3–34 (YILVTGGAGYIGSHTVVELVNNGYNVVVVDNL) is a binding site for NAD(+). Residues 346 to 689 (NNYSWTKFDS…SYTIYRFENF (344 aa)) form a mutarotase region. Histidine 534 serves as the catalytic For mutarotase activity.

In the N-terminal section; belongs to the NAD(P)-dependent epimerase/dehydratase family. This sequence in the C-terminal section; belongs to the aldose epimerase family. It depends on NAD(+) as a cofactor.

The catalysed reaction is UDP-alpha-D-glucose = UDP-alpha-D-galactose. It carries out the reaction alpha-D-glucose = beta-D-glucose. Its pathway is carbohydrate metabolism; galactose metabolism. It functions in the pathway carbohydrate metabolism; hexose metabolism. In terms of biological role, mutarotase converts alpha-aldose to the beta-anomer. It is active on D-glucose, L-arabinose, D-xylose, D-galactose, maltose and lactose. The sequence is that of Bifunctional protein GAL10 (GAL10) from Pachysolen tannophilus (Yeast).